The sequence spans 293 residues: Homoserine kinase (293 aa).

84-94 contributes to the ATP binding site; sequence PLSRGLGSSSA.

Belongs to the GHMP kinase family. Homoserine kinase subfamily.

Its subcellular location is the cytoplasm. The enzyme catalyses L-homoserine + ATP = O-phospho-L-homoserine + ADP + H(+). The protein operates within amino-acid biosynthesis; L-threonine biosynthesis; L-threonine from L-aspartate: step 4/5. Its function is as follows. Catalyzes the ATP-dependent phosphorylation of L-homoserine to L-homoserine phosphate. The sequence is that of Homoserine kinase from Nitratiruptor sp. (strain SB155-2).